We begin with the raw amino-acid sequence, 726 residues long: tRNA endonuclease ANKZF1 (726 aa).

A disordered region spans residues 40 to 61 (LARAPRTSCSGSGERESPERKL). Over residues 52 to 61 (GERESPERKL) the composition is skewed to basic and acidic residues. The C2H2-type zinc finger occupies 72–96 (LFCSTCDQTFQNHQEQREHYKLDWH). Residues 120 to 130 (STGDLSSISGS) are compositionally biased toward low complexity. Residues 120 to 141 (STGDLSSISGSEDSDSASEEDL) form a disordered region. Residues 131 to 141 (EDSDSASEEDL) are compositionally biased toward acidic residues. The region spanning 203 to 346 (GPRDCVVLMA…QRVLHKLTTL (144 aa)) is the VLRF1 domain. Gln246 is a catalytic residue. Residues Ser258, Ser361, and Ser398 each carry the phosphoserine modification. 2 disordered regions span residues 387–409 (DEKE…EGED) and 436–474 (RRRR…SSQA). Over residues 436 to 445 (RRRRKRNKKE) the composition is skewed to basic residues. A compositionally biased stretch (low complexity) spans 457 to 473 (TLLQQTQEEEPSTQSSQ). The ANK 1 repeat unit spans residues 493-526 (ELWNALLAACRAGDVGVLKLQLAPSPADPRVLSL). Ser533 is subject to Phosphoserine. The ANK 2 repeat unit spans residues 534–563 (GGFTLLHAAAAAGRGSVVRLLLEAGADPTV). The disordered stretch occupies residues 588–656 (MEKNPDAYDY…RRFAALSDRE (69 aa)). Position 607 is a phosphothreonine (Thr607). A coiled-coil region spans residues 609 to 659 (EMEARQATRKREQKAARRQREEQQQRQQEQEEREREEQRRFAALSDREKRA). Residues 610–656 (MEARQATRKREQKAARRQREEQQQRQQEQEEREREEQRRFAALSDRE) are compositionally biased toward basic and acidic residues. The tract at residues 654–666 (DREKRALAAERRL) is VCP/p97-interacting motif (VIM). Phosphoserine occurs at positions 675 and 680.

It belongs to the ANKZF1/VMS1 family. Interacts (via VIM motif) with VCP.

Its subcellular location is the cytoplasm. Endonuclease that cleaves polypeptidyl-tRNAs downstream of the ribosome-associated quality control (RQC) pathway to release incompletely synthesized polypeptides for degradation. The RQC pathway disassembles aberrantly stalled translation complexes to recycle or degrade the constituent parts. ANKZF1 acts downstream disassembly of stalled ribosomes and specifically cleaves off the terminal 3'-CCA nucleotides universal to all tRNAs from polypeptidyl-tRNAs, releasing (1) ubiquitinated polypeptides from 60S ribosomal subunit for degradation and (2) cleaved tRNAs. ANKZF1-cleaved tRNAs are then repaired and recycled by ELAC1 and TRNT1. Also plays a role in the cellular response to hydrogen peroxide and in the maintenance of mitochondrial integrity under conditions of cellular stress. This Homo sapiens (Human) protein is tRNA endonuclease ANKZF1.